Reading from the N-terminus, the 254-residue chain is Proteasome subunit alpha type-7 (254 aa).

O-linked (GlcNAc) serine glycosylation occurs at Ser136. Tyr159 is subject to Phosphotyrosine. The residue at position 233 (Lys233) is an N6-acetyllysine.

It belongs to the peptidase T1A family. The 26S proteasome consists of a 20S proteasome core and two 19S regulatory subunits. The 20S proteasome core is a barrel-shaped complex made of 28 subunits that are arranged in four stacked rings. The two outer rings are each formed by seven alpha subunits, and the two inner rings are formed by seven beta subunits. The proteolytic activity is exerted by three beta-subunits PSMB5, PSMB6 and PSMB7. PSMA7 interacts directly with the PSMG1-PSMG2 heterodimer which promotes 20S proteasome assembly. Interacts with HIF1A. Interacts with RAB7A. Interacts with PRKN. Interacts with ABL1 and ABL2. Interacts with EMAP2. Interacts with MAVS. In terms of tissue distribution, ubiquitous.

It is found in the cytoplasm. It localises to the nucleus. Its function is as follows. Component of the 20S core proteasome complex involved in the proteolytic degradation of most intracellular proteins. This complex plays numerous essential roles within the cell by associating with different regulatory particles. Associated with two 19S regulatory particles, forms the 26S proteasome and thus participates in the ATP-dependent degradation of ubiquitinated proteins. The 26S proteasome plays a key role in the maintenance of protein homeostasis by removing misfolded or damaged proteins that could impair cellular functions, and by removing proteins whose functions are no longer required. Associated with the PA200 or PA28, the 20S proteasome mediates ubiquitin-independent protein degradation. This type of proteolysis is required in several pathways including spermatogenesis (20S-PA200 complex) or generation of a subset of MHC class I-presented antigenic peptides (20S-PA28 complex). Inhibits the transactivation function of HIF-1A under both normoxic and hypoxia-mimicking conditions. The interaction with EMAP2 increases the proteasome-mediated HIF-1A degradation under the hypoxic conditions. Plays a role in hepatitis C virus internal ribosome entry site-mediated translation. Mediates nuclear translocation of the androgen receptor (AR) and thereby enhances androgen-mediated transactivation. Promotes MAVS degradation and thereby negatively regulates MAVS-mediated innate immune response. The polypeptide is Proteasome subunit alpha type-7 (Psma7) (Rattus norvegicus (Rat)).